A 458-amino-acid polypeptide reads, in one-letter code: tRNA(Ile)-lysidine synthase (458 aa).

Residue 36–41 (SGGADS) coordinates ATP.

Belongs to the tRNA(Ile)-lysidine synthase family.

The protein resides in the cytoplasm. It carries out the reaction cytidine(34) in tRNA(Ile2) + L-lysine + ATP = lysidine(34) in tRNA(Ile2) + AMP + diphosphate + H(+). Its function is as follows. Ligates lysine onto the cytidine present at position 34 of the AUA codon-specific tRNA(Ile) that contains the anticodon CAU, in an ATP-dependent manner. Cytidine is converted to lysidine, thus changing the amino acid specificity of the tRNA from methionine to isoleucine. The chain is tRNA(Ile)-lysidine synthase from Protochlamydia amoebophila (strain UWE25).